The sequence spans 220 residues: Cytidylate kinase (220 aa).

10 to 18 contacts ATP; it reads GPAGAGKST.

It belongs to the cytidylate kinase family. Type 1 subfamily.

Its subcellular location is the cytoplasm. It catalyses the reaction CMP + ATP = CDP + ADP. The enzyme catalyses dCMP + ATP = dCDP + ADP. The sequence is that of Cytidylate kinase from Alkaliphilus metalliredigens (strain QYMF).